The sequence spans 515 residues: Putative pumilio homolog 8, chloroplastic (515 aa).

Residues 1–33 are disordered; the sequence is MMRGEFGEASSLSRSPSSPLQTEPHPQSPKFYR. The transit peptide at 1 to 70 directs the protein to the chloroplast; sequence MMRGEFGEAS…LSSYFSNGLC (70 aa). The span at 10–20 shows a compositional bias: low complexity; sequence SSLSRSPSSPL. Residues 174–515 enclose the PUM-HD domain; sequence SGVGALFDHQ…RIFSRNLLKN (342 aa). 8 Pumilio repeats span residues 198 to 233, 234 to 269, 270 to 308, 310 to 345, 346 to 381, 382 to 417, 418 to 456, and 457 to 490; these read EFQG…VIFS, EVIP…QIIL, MVTS…SLVK, ALRP…FIFE, DATK…KLVT, EISR…AMLA, QLKG…ELIS, and VPHF…TLVE.

Its subcellular location is the plastid. It is found in the chloroplast. The protein resides in the cytoplasm. In terms of biological role, sequence-specific RNA-binding protein that regulates translation and mRNA stability by binding the 3'-UTR of target mRNAs. The sequence is that of Putative pumilio homolog 8, chloroplastic (APUM8) from Arabidopsis thaliana (Mouse-ear cress).